Here is a 335-residue protein sequence, read N- to C-terminus: Methyltransferase pgmE (335 aa).

The protein belongs to the methyltransferase superfamily.

The protein operates within pigment biosynthesis. It participates in secondary metabolite biosynthesis. In terms of biological role, methyltransferase; part of the gene cluster that mediates the biosynthesis of pleosporalin A, ascomycone A, as well as a third cryptic naphthoquinone derived pigment, all responsible for the coloration of conidia. Essential for the production of pleosporalin A, but not the 2 other final products. The pathway begins with the biosynthesis of the cyclized heptaketide 3-acetonyl-1,6,8-trihydroxy-2-naphthaldehyde by the NR-PKS pgmA. The C-6 hydroxyl group is further methylated by the O-methyltransferase pgmB to yield fusarubinaldehyde which is in turn oxidized by the cytochrome P450 monooxygenase pgmC at C-9. The C-1 hydroxyl group is then methylated spontaneously. Although pgmE, pgmD and pgmH are essential for the production of pleosporalin A, it is not the case for the 2 other final products and it remains difficult to assign a specific function to each enzyme. PgmF and pgmG seem not to be involved in pigment biosynthesis although they were regulated by the cluster-specific transcription factor pgmR. This chain is Methyltransferase pgmE, found in Aspergillus terreus (strain NIH 2624 / FGSC A1156).